The chain runs to 557 residues: Glutamyl-tRNA(Gln) amidotransferase subunit B, mitochondrial (557 aa).

A mitochondrion-targeting transit peptide spans 1 to 41; the sequence is MAAPMLRWGCRGRRWAFARVDGGSCHRRGAPTGSTSNQIRG. The tract at residues 26-45 is disordered; the sequence is HRRGAPTGSTSNQIRGESSV. Over residues 32 to 45 the composition is skewed to polar residues; the sequence is TGSTSNQIRGESSV. Residue lysine 529 is modified to N6-succinyllysine.

This sequence belongs to the GatB/GatE family. GatB subfamily. Subunit of the heterotrimeric GatCAB amidotransferase (AdT) complex, composed of A (QRSL1), B (GATB) and C (GATC) subunits. Predominantly expressed in tissues characterized by high rates of oxidative phosphorylation (OxPhos), including muscle and heart.

Its subcellular location is the mitochondrion. The catalysed reaction is L-glutamyl-tRNA(Gln) + L-glutamine + ATP + H2O = L-glutaminyl-tRNA(Gln) + L-glutamate + ADP + phosphate + H(+). Functionally, allows the formation of correctly charged Gln-tRNA(Gln) through the transamidation of misacylated Glu-tRNA(Gln) in the mitochondria. The reaction takes place in the presence of glutamine and ATP through an activated gamma-phospho-Glu-tRNA(Gln). This Homo sapiens (Human) protein is Glutamyl-tRNA(Gln) amidotransferase subunit B, mitochondrial.